We begin with the raw amino-acid sequence, 242 residues long: Polycomb group RING finger protein 3 (242 aa).

The RING-type zinc-finger motif lies at 17 to 56 (CRLCNGYLIDATTVTECLHTFCRSCLVKYLEENNTCPTCR). Residues 120-149 (EAHRNGETKTDEHTHKEPPEEKQEEDHDYH) are disordered.

In terms of assembly, component of a PRC1-like complex.

It localises to the nucleus. Component of a Polycomb group (PcG) multiprotein PRC1-like complex, a complex class required to maintain the transcriptionally repressive state of many genes, including Hox genes, throughout development. PcG PRC1 complex acts via chromatin remodeling and modification of histones; it mediates monoubiquitination of histone H2A 'Lys-119', rendering chromatin heritably changed in its expressibility. Within the PRC1-like complex, regulates RNF2 ubiquitin ligase activity. The polypeptide is Polycomb group RING finger protein 3 (pcgf3) (Xenopus tropicalis (Western clawed frog)).